Here is a 695-residue protein sequence, read N- to C-terminus: Protein EARLY FLOWERING 3 (695 aa).

The span at 1 to 11 (MKRGKDEEKIL) shows a compositional bias: basic and acidic residues. Disordered stretches follow at residues 1–33 (MKRG…APPR), 48–75 (RFGD…SQPC), 136–159 (RSQS…VAPS), 216–283 (EKSA…REYS), and 541–653 (CSSQ…QTTR). The span at 54 to 74 (TMNSRSNNTSTLVHPGPSSQP) shows a compositional bias: polar residues. Composition is skewed to basic and acidic residues over residues 216–226 (EKSASSHDRVN), 234–253 (QESR…KDTD), and 260–283 (LATE…REYS). The interval 261 to 484 (ATENHSQEGH…VMSPSEGLIY (224 aa)) is interaction with ELF3. 2 stretches are compositionally biased toward polar residues: residues 551–567 (PNEQ…LQNT) and 579–588 (APQQQQQPTK). 2 stretches are compositionally biased toward low complexity: residues 598–616 (QGST…GSKS) and 636–653 (TMTT…QTTR).

As to quaternary structure, interacts specifically with both Pr and Pfr forms of phytochrome B. Interacts with ELF4. May form a homodimer.

The protein resides in the nucleus. May be a transcription factor part of a circadian clock input pathway. Acts within a 'zeitnehmer' feedback loop and is involved in its own circadian regulation. Has no role in regulating circadian clock function in the dark. Part of a corepressor complex consisting of ELF4, ELF3, and LUX involved in the transcriptional regulation of APRR9. The activity of the protein may be decreased in long day conditions due to its interaction with phytochrome B (phyB). Can regulate the initiation of flowering independently of phyB. Also involved in responses to nematode parasitism, like the formation of the nematode feeding structure. In Arabidopsis thaliana (Mouse-ear cress), this protein is Protein EARLY FLOWERING 3 (ELF3).